Reading from the N-terminus, the 123-residue chain is UPF0102 protein mma_0204 (123 aa).

The protein belongs to the UPF0102 family.

In Janthinobacterium sp. (strain Marseille) (Minibacterium massiliensis), this protein is UPF0102 protein mma_0204.